A 471-amino-acid polypeptide reads, in one-letter code: DnaJ protein P58IPK homolog B (471 aa).

The signal sequence occupies residues 1–24 (MARWPWRWRVLLPLLLLHSSPVFA). TPR repeat units follow at residues 32–65 (PSTL…DPNH), 66–99 (SEAY…KPGS), 112–146 (AQNA…SPNC), 148–180 (KAKL…DEDN), 181–214 (LDAL…DPEH), 227–260 (LLKK…DPDH), 265–298 (VHLY…DGEL), and 300–332 (DALT…SPQD). N-linked (GlcNAc...) asparagine glycosylation occurs at Asn-64. The 67-residue stretch at 353–419 (DWYKILGISK…DKRVRYDRGE (67 aa)) folds into the J domain.

As to quaternary structure, interacts with BIP1.

Its subcellular location is the endoplasmic reticulum lumen. Functionally, may play a role in protein folding in the endoplasmic reticulum. The polypeptide is DnaJ protein P58IPK homolog B (Oryza sativa subsp. japonica (Rice)).